Consider the following 173-residue polypeptide: C-phycocyanin beta subunit (173 aa).

N4-methylasparagine is present on Asn-73. Cys-83 and Cys-154 together coordinate (2R,3E)-phycocyanobilin.

Belongs to the phycobiliprotein family. Heterodimer of an alpha and a beta subunit. Part of 2 PBS rod complexes, the conventional PBS rod and a photosystem I-specific CpcL-PBS rod. Post-translationally, contains two covalently linked bilin chromophores.

The protein localises to the cellular thylakoid membrane. Light-harvesting photosynthetic bile pigment-protein from the phycobiliprotein complex (phycobilisome, PBS). Phycocyanin is the major phycobiliprotein in the PBS rod. This Nostoc sp. (strain PCC 7120 / SAG 25.82 / UTEX 2576) protein is C-phycocyanin beta subunit (cpcB).